Reading from the N-terminus, the 444-residue chain is Na(+)-translocating NADH-quinone reductase subunit A (444 aa).

The protein belongs to the NqrA family. Composed of six subunits; NqrA, NqrB, NqrC, NqrD, NqrE and NqrF.

It catalyses the reaction a ubiquinone + n Na(+)(in) + NADH + H(+) = a ubiquinol + n Na(+)(out) + NAD(+). Its function is as follows. NQR complex catalyzes the reduction of ubiquinone-1 to ubiquinol by two successive reactions, coupled with the transport of Na(+) ions from the cytoplasm to the periplasm. NqrA to NqrE are probably involved in the second step, the conversion of ubisemiquinone to ubiquinol. The sequence is that of Na(+)-translocating NADH-quinone reductase subunit A from Shewanella amazonensis (strain ATCC BAA-1098 / SB2B).